The primary structure comprises 420 residues: MKTLIARHKAGEHIGICSVCSAHPLVIEAALAFDRNSTRKVLIEATSNQVNQFGGYTGMTPADFREFVFTIADKVGFARERIILGGDHLGPNCWQQENADAAMEKSVELVKEYVRAGFSKIHLDASMSCAGDPIPLAPETVAERAAVLCFAAESVATDCQREQLSYVIGTEVPVPGGEASAIQSVHITHVEDAANTLRTHQKAFIARGLTEALTRVIAIVVQPGVEFDHSNIIHYQPQEAQPLAQWIENTRMVYEAHSTDYQTRTAYWELVRDHFAILKVGPALTFALREAIFALAQIEQELIAPENRSGCLAVIEEVMLDEPQYWKKYYRTGFNDSLLDIRYSLSDRIRYYWPHSRIKNSVETMMVNLEGVDIPLGMISQYLPKQFERIQSGELSAIPHQLIMDKIYDVLRAYRYGCAE.

Belongs to the GatZ/KbaZ family. GatZ subfamily. In terms of assembly, forms a complex with GatY.

The protein operates within carbohydrate metabolism; D-tagatose 6-phosphate degradation; D-glyceraldehyde 3-phosphate and glycerone phosphate from D-tagatose 6-phosphate: step 2/2. In terms of biological role, component of the tagatose-1,6-bisphosphate aldolase GatYZ that is required for full activity and stability of the Y subunit. Could have a chaperone-like function for the proper and stable folding of GatY. When expressed alone, GatZ does not show any aldolase activity. Is involved in the catabolism of galactitol. In Escherichia coli O139:H28 (strain E24377A / ETEC), this protein is D-tagatose-1,6-bisphosphate aldolase subunit GatZ.